The primary structure comprises 92 residues: Small ribosomal subunit protein uS19c (92 aa).

This sequence belongs to the universal ribosomal protein uS19 family.

The protein resides in the plastid. It is found in the chloroplast. Protein S19 forms a complex with S13 that binds strongly to the 16S ribosomal RNA. The protein is Small ribosomal subunit protein uS19c of Nasturtium officinale (Watercress).